A 346-amino-acid polypeptide reads, in one-letter code: Protein NDL1 (346 aa).

It belongs to the NDRG family. As to quaternary structure, interacts with GB1. Interacts with the heterodimers formed by GB1 and GG1, or GB1 and GG2. Interacts with RGS1. As to expression, expressed in root vasculature, cotyledons, leaves, petals, mature stamens and pollen grains.

It is found in the cytoplasm. Functionally, interacts with the heterotrimeric G protein beta subunit GB1 and plays an significant role in GB1-dependent regulation of lateral root formation. Involved in a signaling pathway that modulates root auxin transport and auxin gradients. Acts partially by positively regulating the auxin carrier PIN2 and AUX1. Acts, together with GB1 as positive regulator of meristem initiation and branching. GB1 and NDL1 positively regulate basipetal inflorescence auxin transport and modulate MAX2 expression in shoots, which regulates organ and lateral meristem formation by the establishment and maintenance of auxin gradients. The chain is Protein NDL1 from Arabidopsis thaliana (Mouse-ear cress).